The chain runs to 51 residues: Defensin-like protein 1 (51 aa).

Position 1 is a pyrrolidone carboxylic acid (Gln-1). 4 disulfide bridges follow: Cys-4–Cys-51, Cys-15–Cys-36, Cys-21–Cys-45, and Cys-25–Cys-47.

As to quaternary structure, forms oligomers in its native state.

Possesses antifungal activity sensitive to inorganic cations. This chain is Defensin-like protein 1, found in Sinapis alba (White mustard).